The chain runs to 387 residues: Protein-glutamate methylesterase/protein-glutamine glutaminase 2 (387 aa).

Residues 4–121 (KVLVVDDSGF…SRNPQKVKQL (118 aa)) enclose the Response regulatory domain. Asp55 carries the 4-aspartylphosphate modification. Low complexity predominate over residues 148 to 183 (AAPAAPTSSSRAPAPTTAPARAVPTRTAAPATAPAA). Positions 148–199 (AAPAAPTSSSRAPAPTTAPARAVPTRTAAPATAPAAHAHHAPAHPTTSGTPK) are disordered. The region spanning 192–384 (PTTSGTPKRK…LDDIGRHLVE (193 aa)) is the CheB-type methylesterase domain. Residues Ser211, His238, and Asp331 contribute to the active site.

It belongs to the CheB family. Phosphorylated by CheA. Phosphorylation of the N-terminal regulatory domain activates the methylesterase activity.

It localises to the cytoplasm. The enzyme catalyses [protein]-L-glutamate 5-O-methyl ester + H2O = L-glutamyl-[protein] + methanol + H(+). It carries out the reaction L-glutaminyl-[protein] + H2O = L-glutamyl-[protein] + NH4(+). Involved in chemotaxis. Part of a chemotaxis signal transduction system that modulates chemotaxis in response to various stimuli. Catalyzes the demethylation of specific methylglutamate residues introduced into the chemoreceptors (methyl-accepting chemotaxis proteins or MCP) by CheR. Also mediates the irreversible deamidation of specific glutamine residues to glutamic acid. This is Protein-glutamate methylesterase/protein-glutamine glutaminase 2 from Pseudomonas savastanoi pv. phaseolicola (strain 1448A / Race 6) (Pseudomonas syringae pv. phaseolicola (strain 1448A / Race 6)).